The primary structure comprises 136 residues: Small ribosomal subunit protein uS8c (136 aa).

Belongs to the universal ribosomal protein uS8 family. In terms of assembly, part of the 30S ribosomal subunit.

It localises to the plastid. The protein resides in the chloroplast. Functionally, one of the primary rRNA binding proteins, it binds directly to 16S rRNA central domain where it helps coordinate assembly of the platform of the 30S subunit. In Agrostis stolonifera (Creeping bentgrass), this protein is Small ribosomal subunit protein uS8c (rps8).